The following is a 650-amino-acid chain: Acetyl-coenzyme A synthetase (650 aa).

CoA-binding positions include 191–194, threonine 311, and asparagine 335; that span reads RGGR. Residues 387–389, 411–416, aspartate 500, and arginine 515 contribute to the ATP site; these read GEP and DTWWQT. Residue serine 523 coordinates CoA. Arginine 526 contacts ATP. Residues valine 537, histidine 539, and valine 542 each contribute to the Mg(2+) site. Residue arginine 584 participates in CoA binding. At lysine 609 the chain carries N6-acetyllysine.

Belongs to the ATP-dependent AMP-binding enzyme family. Mg(2+) serves as cofactor. Post-translationally, acetylated. Deacetylation by the SIR2-homolog deacetylase activates the enzyme.

The catalysed reaction is acetate + ATP + CoA = acetyl-CoA + AMP + diphosphate. In terms of biological role, catalyzes the conversion of acetate into acetyl-CoA (AcCoA), an essential intermediate at the junction of anabolic and catabolic pathways. AcsA undergoes a two-step reaction. In the first half reaction, AcsA combines acetate with ATP to form acetyl-adenylate (AcAMP) intermediate. In the second half reaction, it can then transfer the acetyl group from AcAMP to the sulfhydryl group of CoA, forming the product AcCoA. The protein is Acetyl-coenzyme A synthetase of Shewanella putrefaciens (strain CN-32 / ATCC BAA-453).